The primary structure comprises 538 residues: Cytochrome P450 monooxygenase fogE (538 aa).

The chain crosses the membrane as a helical span at residues 4-24 (ASSAILLVALIAALWRLSLIG). Residue Cys-437 participates in heme binding.

This sequence belongs to the cytochrome P450 family. The cofactor is heme.

The protein localises to the membrane. It functions in the pathway secondary metabolite biosynthesis. In terms of biological role, cytochrome P450 monooxygenase; part of the gene cluster that mediates the biosynthesis of flavoglaucin and congeners (including aspergin, dihydroauroglaucin and auroglaucin), prenylated salicylaldehyde derivatives carrying a saturated or an unsaturated C-7 side chain. The PKS fogA releases the carboxylic acid (8E,10E,12E)-3,5,7-trihydroxytetradeca-8,10,12-trienoic acid as its product, as well as derivatives with one and two double bonds. FogA is indeed able to reduce the initial triketide, thus being at least partially responsible for the differently saturated heptyl side chains of flavoglaucin congeners. The oxidoreductases fogB, fogC and fogD modify the nascent polyketide in fogA-bound form and, together, fogA, fogB, fogC and fogD are necessary for the formation of the aromatic core and the cyclized PKS products are released as salicyl alcohols. In particular, fogB is responsible for oxidation of a hydroxyl group or reduction of remaining double bond(s) at the C-7 residue whereas fogD is probably involved in the reductive release of the modified PKS products. The cytochrome P450 monooxygenase fogE is then responsible for the hydroxylation at C-3 of the benzene ring. The fogE products are substrates of the prenyltransferase fogH and the prenylated benzyl alcohols are subsequently oxidized by the fogF to produce the final aryl aldehydes flavoglaucin and congeners. The short-chain dehydrogenase fogG does not seem to be involved in the biosynthesis of the prenylated salicylaldehyde derivatives. The polypeptide is Cytochrome P450 monooxygenase fogE (Aspergillus ruber (strain CBS 135680)).